We begin with the raw amino-acid sequence, 262 residues long: Tryptophan synthase alpha chain (262 aa).

Active-site proton acceptor residues include Glu-49 and Asp-60.

Belongs to the TrpA family. As to quaternary structure, tetramer of two alpha and two beta chains.

It carries out the reaction (1S,2R)-1-C-(indol-3-yl)glycerol 3-phosphate + L-serine = D-glyceraldehyde 3-phosphate + L-tryptophan + H2O. Its pathway is amino-acid biosynthesis; L-tryptophan biosynthesis; L-tryptophan from chorismate: step 5/5. Functionally, the alpha subunit is responsible for the aldol cleavage of indoleglycerol phosphate to indole and glyceraldehyde 3-phosphate. This is Tryptophan synthase alpha chain from Thermoanaerobacter sp. (strain X514).